A 201-amino-acid chain; its full sequence is Elongation factor Ts (201 aa).

The segment at Thr-81–Val-84 is involved in Mg(2+) ion dislocation from EF-Tu.

Belongs to the EF-Ts family.

The protein resides in the cytoplasm. Its function is as follows. Associates with the EF-Tu.GDP complex and induces the exchange of GDP to GTP. It remains bound to the aminoacyl-tRNA.EF-Tu.GTP complex up to the GTP hydrolysis stage on the ribosome. In Syntrophus aciditrophicus (strain SB), this protein is Elongation factor Ts.